The chain runs to 255 residues: MSSIGTGYDLSASTFSPDGRVFQVEYAMKAVENSSTAIGIRCKDGVVFGVEKLVLSKLYEEGSNKRLFNVDRHVGMAVAGLLADARSLADIAREEASNFRSNFGYNIPLKHLADRVAMYVHAYTLYSAVRPFGCSFMLGSYSVNDGAQLYMIDPSGVSYGYWGCAIGKARQAAKTEIEKLQMKEMTCRDIVKEVAKIIYIVHDEVKDKAFELELSWVGELTNGRHEIVPKDIREEAEKYAKESLKEEDESDDDNM.

N-acetylserine is present on serine 2. N6-acetyllysine is present on residues lysine 57, lysine 206, and lysine 230. Phosphoserine occurs at positions 243 and 250.

The protein belongs to the peptidase T1A family. As to quaternary structure, the 26S proteasome consists of a 20S proteasome core and two 19S regulatory subunits. The 20S proteasome core is a barrel-shaped complex made of 28 subunits that are arranged in four stacked rings. The two outer rings are each formed by seven alpha subunits, and the two inner rings are formed by seven beta subunits. The proteolytic activity is exerted by three beta-subunits PSMB5, PSMB6 and PSMB7. Interacts with AURKB. Interacts with CDKN1A. Interacts with MDM2 and RB1. Interacts with the C-terminus of TBXA2R isoform 2. Interacts with DNAJB2. (Microbial infection) Interacts with HIV-1 Tat protein. In terms of assembly, (Microbial infection) Interacts with hepatitis C virus (HCV) F protein. As to quaternary structure, (Microbial infection) Interacts with Epstein-Barr virus EBNA3 proteins.

It localises to the cytoplasm. Its subcellular location is the nucleus. In terms of biological role, component of the 20S core proteasome complex involved in the proteolytic degradation of most intracellular proteins. This complex plays numerous essential roles within the cell by associating with different regulatory particles. Associated with two 19S regulatory particles, forms the 26S proteasome and thus participates in the ATP-dependent degradation of ubiquitinated proteins. The 26S proteasome plays a key role in the maintenance of protein homeostasis by removing misfolded or damaged proteins that could impair cellular functions, and by removing proteins whose functions are no longer required. Associated with the PA200 or PA28, the 20S proteasome mediates ubiquitin-independent protein degradation. This type of proteolysis is required in several pathways including spermatogenesis (20S-PA200 complex) or generation of a subset of MHC class I-presented antigenic peptides (20S-PA28 complex). Binds to the C-terminus of CDKN1A and thereby mediates its degradation. Negatively regulates the membrane trafficking of the cell-surface thromboxane A2 receptor (TBXA2R) isoform 2. The polypeptide is Proteasome subunit alpha type-3 (Homo sapiens (Human)).